The sequence spans 253 residues: Ubiquinone biosynthesis O-methyltransferase (253 aa).

The S-adenosyl-L-methionine site is built by Arg47, Gly78, Asp99, and Met141.

This sequence belongs to the methyltransferase superfamily. UbiG/COQ3 family.

It catalyses the reaction a 3-demethylubiquinol + S-adenosyl-L-methionine = a ubiquinol + S-adenosyl-L-homocysteine + H(+). The enzyme catalyses a 3-(all-trans-polyprenyl)benzene-1,2-diol + S-adenosyl-L-methionine = a 2-methoxy-6-(all-trans-polyprenyl)phenol + S-adenosyl-L-homocysteine + H(+). The protein operates within cofactor biosynthesis; ubiquinone biosynthesis. O-methyltransferase that catalyzes the 2 O-methylation steps in the ubiquinone biosynthetic pathway. This chain is Ubiquinone biosynthesis O-methyltransferase, found in Rhodopseudomonas palustris (strain ATCC BAA-98 / CGA009).